The following is a 237-amino-acid chain: Ribonuclease PH (237 aa).

Phosphate contacts are provided by residues Arg86 and 124-126; that span reads GTR.

This sequence belongs to the RNase PH family. As to quaternary structure, homohexameric ring arranged as a trimer of dimers.

It carries out the reaction tRNA(n+1) + phosphate = tRNA(n) + a ribonucleoside 5'-diphosphate. Functionally, phosphorolytic 3'-5' exoribonuclease that plays an important role in tRNA 3'-end maturation. Removes nucleotide residues following the 3'-CCA terminus of tRNAs; can also add nucleotides to the ends of RNA molecules by using nucleoside diphosphates as substrates, but this may not be physiologically important. Probably plays a role in initiation of 16S rRNA degradation (leading to ribosome degradation) during starvation. The chain is Ribonuclease PH from Shewanella denitrificans (strain OS217 / ATCC BAA-1090 / DSM 15013).